The primary structure comprises 143 residues: Large ribosomal subunit protein uL13 (143 aa).

The protein belongs to the universal ribosomal protein uL13 family. Part of the 50S ribosomal subunit.

In terms of biological role, this protein is one of the early assembly proteins of the 50S ribosomal subunit, although it is not seen to bind rRNA by itself. It is important during the early stages of 50S assembly. The chain is Large ribosomal subunit protein uL13 from Prochlorococcus marinus (strain MIT 9312).